A 151-amino-acid chain; its full sequence is 3-dehydroquinate dehydratase (151 aa).

The active-site Proton acceptor is the Tyr-24. Residues Asn-76, His-82, and Asp-89 each contribute to the substrate site. The active-site Proton donor is the His-102. Residues 103 to 104 (VS) and Arg-113 contribute to the substrate site.

This sequence belongs to the type-II 3-dehydroquinase family. Homododecamer.

It carries out the reaction 3-dehydroquinate = 3-dehydroshikimate + H2O. It functions in the pathway metabolic intermediate biosynthesis; chorismate biosynthesis; chorismate from D-erythrose 4-phosphate and phosphoenolpyruvate: step 3/7. In terms of biological role, catalyzes a trans-dehydration via an enolate intermediate. In Rhodopseudomonas palustris (strain ATCC BAA-98 / CGA009), this protein is 3-dehydroquinate dehydratase.